The chain runs to 187 residues: Large ribosomal subunit protein bL32m (187 aa).

Zn(2+) contacts are provided by cysteine 109, cysteine 112, cysteine 122, and cysteine 125.

It belongs to the bacterial ribosomal protein bL32 family. As to quaternary structure, component of the mitochondrial ribosome large subunit (39S) which comprises a 16S rRNA and about 50 distinct proteins. In terms of processing, MRPL32 precursor is processed by the m-AAA protease (composed of AFG3L2 and SPG7), which cleaves the N-terminal transit peptide. Cleavage by the m-AAA protease takes place prior to assembly into the large subunit, an essential step for mitochondrial ribosome (mitoribosome) assembly. Proper processing by the m-AAA protease is dependent on the zinc-binding region within the tightly folded C-terminal domain of MRPL32: zinc-dependent folding halts degradation initiated from the N-terminus and triggers the release of mature MRPL32.

The protein localises to the mitochondrion. In terms of biological role, component of the mitochondrial large ribosomal subunit (mt-LSU). The mitochondrial ribosome (mitoribosome) is a large ribonucleoprotein complex responsible for the synthesis of proteins inside mitochondria. The sequence is that of Large ribosomal subunit protein bL32m (Mrpl32) from Mus musculus (Mouse).